A 506-amino-acid chain; its full sequence is Allantoinase (506 aa).

Positions 105, 107, 195, 231, 292, and 366 each coordinate Zn(2+). Lysine 195 carries the N6-carboxylysine modification.

Belongs to the metallo-dependent hydrolases superfamily. Allantoinase family. As to quaternary structure, homotetramer. It depends on Zn(2+) as a cofactor. Carboxylation allows a single lysine to coordinate two zinc ions.

It carries out the reaction (S)-allantoin + H2O = allantoate + H(+). It functions in the pathway nitrogen metabolism; (S)-allantoin degradation; allantoate from (S)-allantoin: step 1/1. Its function is as follows. Catalyzes the conversion of allantoin (5-ureidohydantoin) to allantoate by hydrolytic cleavage of the five-member hydantoin ring. Catalyzes the first step of the ureide allantoin degradation followed by the sequential activity of AAH, UGLYAH and UAH which allows a complete purine breakdown without the intermediate generation of urea. This Arabidopsis thaliana (Mouse-ear cress) protein is Allantoinase (ALN).